A 129-amino-acid chain; its full sequence is MSTKVENILEELKSLNLLEAAELVKQIEETFDVDASAASGGVMMAAPSSAPAASDVEEKTEFDVVLEEVPAPKKIAVLKVVRSLTGLGLKEAKDLVESAPKTLKEGASKDDAEAMKKQLEDAGATVGVK.

It belongs to the bacterial ribosomal protein bL12 family. Homodimer. Part of the ribosomal stalk of the 50S ribosomal subunit. Forms a multimeric L10(L12)X complex, where L10 forms an elongated spine to which 2 to 4 L12 dimers bind in a sequential fashion. Binds GTP-bound translation factors.

It is found in the plastid. The protein localises to the chloroplast. Forms part of the ribosomal stalk which helps the ribosome interact with GTP-bound translation factors. Is thus essential for accurate translation. The sequence is that of Large ribosomal subunit protein bL12c from Porphyra purpurea (Red seaweed).